A 429-amino-acid chain; its full sequence is Probable M18 family aminopeptidase 2 (429 aa).

Positions 82, 156, and 401 each coordinate Zn(2+).

The protein belongs to the peptidase M18 family. Zn(2+) serves as cofactor.

This chain is Probable M18 family aminopeptidase 2, found in Pseudomonas syringae pv. tomato (strain ATCC BAA-871 / DC3000).